Consider the following 163-residue polypeptide: Phosphopantetheine adenylyltransferase (163 aa).

Serine 10 lines the substrate pocket. ATP contacts are provided by residues serine 10 to phenylalanine 11 and histidine 18. Substrate-binding residues include lysine 42, leucine 74, and arginine 88. ATP is bound by residues glycine 89–arginine 91, glutamate 99, and tyrosine 124–serine 130.

Belongs to the bacterial CoaD family. In terms of assembly, homohexamer. Mg(2+) serves as cofactor.

It is found in the cytoplasm. It catalyses the reaction (R)-4'-phosphopantetheine + ATP + H(+) = 3'-dephospho-CoA + diphosphate. Its pathway is cofactor biosynthesis; coenzyme A biosynthesis; CoA from (R)-pantothenate: step 4/5. Its function is as follows. Reversibly transfers an adenylyl group from ATP to 4'-phosphopantetheine, yielding dephospho-CoA (dPCoA) and pyrophosphate. The sequence is that of Phosphopantetheine adenylyltransferase from Bacillus mycoides (strain KBAB4) (Bacillus weihenstephanensis).